The following is a 427-amino-acid chain: Probable WRKY transcription factor 35 (427 aa).

Disordered regions lie at residues 1-45 (MDNF…DLHV) and 266-336 (YTSE…HPPF). The segment covering 23–40 (SPGPPEGPSPSSMSPPPT) has biased composition (pro residues). The WRKY DNA-binding region spans 209 to 275 (SGEVVPSDLW…YTSEHNHPWP (67 aa)). Residues 284-310 (STRSSSSSSLNPSSKSSTAAATTSPSS) show a composition bias toward low complexity. Residues 311–333 (RVFQNNSSKDEPNNSNLPSSSTH) are compositionally biased toward polar residues.

It belongs to the WRKY group II-e family.

The protein localises to the nucleus. In terms of biological role, transcription factor. Interacts specifically with the W box (5'-(T)TGAC[CT]-3'), a frequently occurring elicitor-responsive cis-acting element. In Arabidopsis thaliana (Mouse-ear cress), this protein is Probable WRKY transcription factor 35 (WRKY35).